We begin with the raw amino-acid sequence, 103 residues long: Small ribosomal subunit protein uS10 (103 aa).

Belongs to the universal ribosomal protein uS10 family. Part of the 30S ribosomal subunit.

Involved in the binding of tRNA to the ribosomes. This Neisseria gonorrhoeae (strain NCCP11945) protein is Small ribosomal subunit protein uS10.